The primary structure comprises 485 residues: Pumilio domain-containing protein 7 (485 aa).

Residues 29-72 (NKTHKNKNPKPPVKLLPYRHGSNTTSSDSDSYIFNSGSGSSDAE) are disordered. Over residues 49 to 71 (GSNTTSSDSDSYIFNSGSGSSDA) the composition is skewed to polar residues. Pumilio repeat units lie at residues 86-124 (DVLL…AVFE), 128-163 (ESTT…ELLR), 164-200 (QMID…QLIQ), 201-236 (ELST…TFFV), 237-279 (HFLS…FRIQ), 287-324 (CIVR…TIID), 326-361 (CLLR…EMME), and 370-411 (DVES…RELP). Positions 439–454 (FSSGKKIIDSVMRHGV) are RNA-binding.

RNA-binding protein that binds to the consensus sequence 5'-CUCUGUAUCUUGU-3' in mRNA 3'-UTRs and modulates mRNA expression and stability. Functions redundantly with puf-5 and puf-6 in oocyte formation and organization, early embryonic cell divisions, and repression of expression of glp-1 and other maternal mRNAs in late oogenesis. The protein is Pumilio domain-containing protein 7 of Caenorhabditis elegans.